The chain runs to 176 residues: RNA 2',3'-cyclic phosphodiesterase (176 aa).

Residue His43 is the Proton donor of the active site. Short sequence motifs (HXTX) lie at residues 43 to 46 and 125 to 128; these read HLTL and HITL. His125 functions as the Proton acceptor in the catalytic mechanism.

The protein belongs to the 2H phosphoesterase superfamily. ThpR family. As to quaternary structure, monomer.

It carries out the reaction a 3'-end 2',3'-cyclophospho-ribonucleotide-RNA + H2O = a 3'-end 2'-phospho-ribonucleotide-RNA + H(+). Hydrolyzes RNA 2',3'-cyclic phosphodiester to an RNA 2'-phosphomonoester. In vitro, can also ligate 5' and 3' half-tRNA molecules with 2',3'-cyclic phosphate and 5'-hydroxyl termini, respectively, to the product containing the 2'-5' phosphodiester linkage. This reaction does not require ATP and is reversible. The protein is RNA 2',3'-cyclic phosphodiesterase of Escherichia coli (strain K12).